Reading from the N-terminus, the 127-residue chain is Fluoride-specific ion channel FluC (127 aa).

A run of 4 helical transmembrane segments spans residues 4–24 (LLLA…LLSM), 35–55 (LGTL…FAWF), 71–91 (TGFC…VFLL), and 103–123 (VFVN…LFSA). Na(+) is bound by residues glycine 75 and threonine 78.

It belongs to the fluoride channel Fluc/FEX (TC 1.A.43) family.

It localises to the cell inner membrane. The catalysed reaction is fluoride(in) = fluoride(out). Na(+) is not transported, but it plays an essential structural role and its presence is essential for fluoride channel function. Its function is as follows. Fluoride-specific ion channel. Important for reducing fluoride concentration in the cell, thus reducing its toxicity. In Escherichia coli O8 (strain IAI1), this protein is Fluoride-specific ion channel FluC.